The primary structure comprises 201 residues: Small ribosomal subunit protein uS2 (201 aa).

It belongs to the universal ribosomal protein uS2 family. Part of the 50S ribosomal subunit.

This is Small ribosomal subunit protein uS2 from Thermococcus kodakarensis (strain ATCC BAA-918 / JCM 12380 / KOD1) (Pyrococcus kodakaraensis (strain KOD1)).